We begin with the raw amino-acid sequence, 200 residues long: Glycerol-3-phosphate acyltransferase (200 aa).

The next 5 helical transmembrane spans lie at 8–28 (ALAL…GMVL), 57–77 (LAAA…VLAA), 88–108 (IAGL…FAGG), 114–134 (FLGI…LAWL), and 159–179 (FLLG…LIFW).

The protein belongs to the PlsY family. Probably interacts with PlsX.

The protein localises to the cell inner membrane. The enzyme catalyses an acyl phosphate + sn-glycerol 3-phosphate = a 1-acyl-sn-glycero-3-phosphate + phosphate. Its pathway is lipid metabolism; phospholipid metabolism. Its function is as follows. Catalyzes the transfer of an acyl group from acyl-phosphate (acyl-PO(4)) to glycerol-3-phosphate (G3P) to form lysophosphatidic acid (LPA). This enzyme utilizes acyl-phosphate as fatty acyl donor, but not acyl-CoA or acyl-ACP. The protein is Glycerol-3-phosphate acyltransferase of Roseobacter denitrificans (strain ATCC 33942 / OCh 114) (Erythrobacter sp. (strain OCh 114)).